The sequence spans 472 residues: Flap endonuclease 1 (472 aa).

Residues 1 to 106 form an N-domain region; sequence MGIKGLARFL…EELMKRKERR (106 aa). Residue aspartate 34 participates in Mg(2+) binding. DNA-binding residues include arginine 47 and arginine 72. The Mg(2+) site is built by aspartate 88, glutamate 160, glutamate 162, aspartate 181, and aspartate 183. The segment at 124–263 is I-domain; the sequence is TIRKQLIRTI…LTAYKLLKKH (140 aa). Glutamate 160 provides a ligand contact to DNA. Residues glycine 241 and aspartate 243 each contribute to the DNA site. Aspartate 243 is a Mg(2+) binding site. Residues 348 to 356 are interaction with PCNA; it reads AQTSLDSFF.

Belongs to the XPG/RAD2 endonuclease family. FEN1 subfamily. As to quaternary structure, interacts with PCNA. Three molecules of FEN1 bind to one PCNA trimer with each molecule binding to one PCNA monomer. PCNA stimulates the nuclease activity without altering cleavage specificity. The cofactor is Mg(2+). Post-translationally, phosphorylated. Phosphorylation upon DNA damage induces relocalization to the nuclear plasma.

It is found in the nucleus. The protein localises to the nucleolus. The protein resides in the nucleoplasm. Its subcellular location is the mitochondrion. In terms of biological role, structure-specific nuclease with 5'-flap endonuclease and 5'-3' exonuclease activities involved in DNA replication and repair. During DNA replication, cleaves the 5'-overhanging flap structure that is generated by displacement synthesis when DNA polymerase encounters the 5'-end of a downstream Okazaki fragment. It enters the flap from the 5'-end and then tracks to cleave the flap base, leaving a nick for ligation. Also involved in the long patch base excision repair (LP-BER) pathway, by cleaving within the apurinic/apyrimidinic (AP) site-terminated flap. Acts as a genome stabilization factor that prevents flaps from equilibrating into structures that lead to duplications and deletions. Also possesses 5'-3' exonuclease activity on nicked or gapped double-stranded DNA, and exhibits RNase H activity. Also involved in replication and repair of rDNA and in repairing mitochondrial DNA. The sequence is that of Flap endonuclease 1 from Cryptosporidium muris (strain RN66).